Consider the following 345-residue polypeptide: UDP-N-acetylenolpyruvoylglucosamine reductase (345 aa).

The FAD-binding PCMH-type domain maps to 27-197 (FDASAELAYE…TKVVFKLPKQ (171 aa)). Arg-174 is an active-site residue. The active-site Proton donor is Ser-245. The active site involves Glu-341.

This sequence belongs to the MurB family. The cofactor is FAD.

Its subcellular location is the cytoplasm. It carries out the reaction UDP-N-acetyl-alpha-D-muramate + NADP(+) = UDP-N-acetyl-3-O-(1-carboxyvinyl)-alpha-D-glucosamine + NADPH + H(+). Its pathway is cell wall biogenesis; peptidoglycan biosynthesis. Functionally, cell wall formation. The polypeptide is UDP-N-acetylenolpyruvoylglucosamine reductase (Polynucleobacter asymbioticus (strain DSM 18221 / CIP 109841 / QLW-P1DMWA-1) (Polynucleobacter necessarius subsp. asymbioticus)).